Here is a 455-residue protein sequence, read N- to C-terminus: N-acetyl-S-(2-succino)cysteine lyase (455 aa).

Fumarate is bound at residue T106 to T107. The Proton donor/acceptor role is filled by H154. R233 serves as a coordination point for fumarate. S277 (proton donor/acceptor) is an active-site residue. Residues S278 and K283–N285 each bind fumarate.

It belongs to the lyase 1 family.

It catalyses the reaction N-acetyl-S-(2-succino)-L-cysteine = N-acetyl-L-cysteine + fumarate. Its pathway is amino-acid biosynthesis; L-cysteine biosynthesis. Functionally, catalyzes the cleavage of N-acetyl-S-(2-succino)cysteine into fumarate and N-acetylcysteine. Is involved in a S-(2-succino)cysteine (2SC) degradation pathway that allows the bacterium to recover cysteine from 2SC and to detoxify 2SC that may be a toxic metabolite. Can also perform the reverse reaction in vitro, and has minor activity against 2SC and other small molecule thiols. The polypeptide is N-acetyl-S-(2-succino)cysteine lyase (Enterococcus italicus (strain DSM 15952 / CCUG 50447 / LMG 22039 / TP 1.5)).